Reading from the N-terminus, the 209-residue chain is Ubiquinone biosynthesis protein COQ4 homolog 2, mitochondrial (209 aa).

4 residues coordinate Zn(2+): H118, D119, H122, and E134.

The protein belongs to the COQ4 family. As to quaternary structure, component of a multi-subunit COQ enzyme complex. Zn(2+) is required as a cofactor.

It is found in the mitochondrion inner membrane. It catalyses the reaction a 4-hydroxy-3-methoxy-5-(all-trans-polyprenyl)benzoate + H(+) = a 2-methoxy-6-(all-trans-polyprenyl)phenol + CO2. It functions in the pathway cofactor biosynthesis; ubiquinone biosynthesis. In terms of biological role, lyase that catalyzes the C1-decarboxylation of 4-hydroxy-3-methoxy-5-(all-trans-polyprenyl)benzoic acid into 2-methoxy-6-(all-trans-polyprenyl)phenol during ubiquinone biosynthesis. This is Ubiquinone biosynthesis protein COQ4 homolog 2, mitochondrial from Paramecium tetraurelia.